A 68-amino-acid polypeptide reads, in one-letter code: Large ribosomal subunit protein uL29 (68 aa).

It belongs to the universal ribosomal protein uL29 family.

This Thermoplasma acidophilum (strain ATCC 25905 / DSM 1728 / JCM 9062 / NBRC 15155 / AMRC-C165) protein is Large ribosomal subunit protein uL29 (rpl29).